The chain runs to 162 residues: Austinoid biosynthesis clusters protein J (162 aa).

It belongs to the trt14 isomerase family. As to quaternary structure, homodimer.

It functions in the pathway secondary metabolite biosynthesis; terpenoid biosynthesis. In terms of biological role, part of the gene cluster B that mediates the biosynthesis of austinol and dehydroaustinol, two fungal meroterpenoids. The first step of the pathway is the synthesis of 3,5-dimethylorsellinic acid by the polyketide synthase ausA. 3,5-dimethylorsellinic acid is then prenylated by the polyprenyl transferase ausN. Further epoxidation by the FAD-dependent monooxygenase ausM and cyclization by the probable terpene cyclase ausL lead to the formation of protoaustinoid A. Protoaustinoid A is then oxidized to spiro-lactone preaustinoid A3 by the combined action of the FAD-binding monooxygenases ausB and ausC, and the dioxygenase ausE. Acid-catalyzed keto-rearrangement and ring contraction of the tetraketide portion of preaustinoid A3 by ausJ lead to the formation of preaustinoid A4. The aldo-keto reductase ausK, with the help of ausH, is involved in the next step by transforming preaustinoid A4 into isoaustinone which is in turn hydroxylated by the P450 monooxygenase ausI to form austinolide. Finally, the cytochrome P450 monooxygenase ausG modifies austinolide to austinol. Austinol can be further modified to dehydroaustinol which forms a diffusible complex with diorcinol that initiates conidiation. Due to genetic rearrangements of the clusters and the subsequent loss of some enzymes, the end products of the Emericella nidulans austinoid biosynthesis clusters are austinol and dehydroaustinol, even if additional enzymes, such as the O-acetyltransferase ausQ and the cytochrome P450 monooxygenase ausR are still functional. The sequence is that of Austinoid biosynthesis clusters protein J from Emericella nidulans (strain FGSC A4 / ATCC 38163 / CBS 112.46 / NRRL 194 / M139) (Aspergillus nidulans).